We begin with the raw amino-acid sequence, 678 residues long: Dihydroxyacetone phosphate acyltransferase (678 aa).

Phosphoserine occurs at positions 12 and 17. The short motif at 161 to 166 (HRSYID) is the HXXXXD motif element. Lys-641 bears the N6-acetyllysine mark. Residues 676 to 678 (AKL) carry the Microbody targeting signal motif.

Belongs to the GPAT/DAPAT family. In terms of assembly, part of a heterotrimeric complex composed of GNPAT, AGPS and a modified form of GNPAT. As to expression, highly expressed in liver and testis. Lower levels in heart, brain, lung and kidney. Detected in spleen.

It localises to the peroxisome membrane. The enzyme catalyses dihydroxyacetone phosphate + an acyl-CoA = a 1-acylglycerone 3-phosphate + CoA. It carries out the reaction dihydroxyacetone phosphate + hexadecanoyl-CoA = 1-hexadecanoylglycerone 3-phosphate + CoA. Its pathway is membrane lipid metabolism; glycerophospholipid metabolism. Functionally, dihydroxyacetonephosphate acyltransferase catalyzing the first step in the biosynthesis of plasmalogens, a subset of phospholipids that differ from other glycerolipids by having an alkyl chain attached through a vinyl ether linkage at the sn-1 position of the glycerol backbone, and which unique physical properties have an impact on various aspects of cell signaling and membrane biology. In Mus musculus (Mouse), this protein is Dihydroxyacetone phosphate acyltransferase.